Consider the following 1730-residue polypeptide: Meiosis regulator and mRNA stability factor 1 (1730 aa).

S65 is subject to Phosphoserine. An NYN domain is found at 352-489; it reads IGVFWDIENC…ALLHHANQLI (138 aa). Over residues 655–668 the composition is skewed to basic and acidic residues; it reads MESKSGNRNSDHQQ. The disordered stretch occupies residues 655-722; that stretch reads MESKSGNRNS…VNSPVEKKKR (68 aa). Phosphotyrosine is present on Y698. Positions 781-860 constitute an RRM domain; the sequence is VDIQVSNVDY…KKILVSLSTG (80 aa). HTH OST-type domains lie at 865–939 and 993–1069; these read SLSL…SPLG and SLKV…HNKP. S1081 and S1083 each carry phosphoserine. 6 HTH OST-type domains span residues 1089-1163, 1165-1241, 1249-1324, 1325-1400, 1401-1475, and 1476-1550; these read QLIQ…LTHR, QVKR…RKRE, RTKQ…TEVE, RFKA…INRK, SLRS…VKLT, and SLYL…LKND. The disordered stretch occupies residues 1667 to 1714; the sequence is VQKGNLSCDSSPSSPAASPAPPGPSSEAPRPLFSKDAVESPAKKQPKN. S1684 is subject to Phosphoserine.

In terms of assembly, interacts with LIMK2. As to expression, predominantly present in oocytes and barely detectable in granulosa cells (at protein level).

Its subcellular location is the peroxisome. Its function is as follows. Essential regulator of oogenesis required for female meiotic progression to repress transposable elements and preventing their mobilization, which is essential for the germline integrity. Probably acts via some RNA metabolic process, equivalent to the piRNA system in males, which mediates the repression of transposable elements during meiosis by forming complexes composed of RNAs and governs the methylation and subsequent repression of transposons. Also required to protect from DNA double-strand breaks. This Mus musculus (Mouse) protein is Meiosis regulator and mRNA stability factor 1 (Marf1).